The primary structure comprises 449 residues: UDP-N-acetylmuramoylalanine--D-glutamate ligase (449 aa).

ATP is bound at residue 111–117 (GTNGKST).

This sequence belongs to the MurCDEF family.

The protein localises to the cytoplasm. The catalysed reaction is UDP-N-acetyl-alpha-D-muramoyl-L-alanine + D-glutamate + ATP = UDP-N-acetyl-alpha-D-muramoyl-L-alanyl-D-glutamate + ADP + phosphate + H(+). It functions in the pathway cell wall biogenesis; peptidoglycan biosynthesis. Cell wall formation. Catalyzes the addition of glutamate to the nucleotide precursor UDP-N-acetylmuramoyl-L-alanine (UMA). The chain is UDP-N-acetylmuramoylalanine--D-glutamate ligase from Rickettsia felis (strain ATCC VR-1525 / URRWXCal2) (Rickettsia azadi).